Reading from the N-terminus, the 411-residue chain is Serine hydroxymethyltransferase (411 aa).

(6S)-5,6,7,8-tetrahydrofolate-binding positions include Leu-117 and Gly-121–Leu-123. Position 226 is an N6-(pyridoxal phosphate)lysine (Lys-226). (6S)-5,6,7,8-tetrahydrofolate-binding positions include Glu-241 and Ser-349–Phe-351.

Belongs to the SHMT family. In terms of assembly, homodimer. Requires pyridoxal 5'-phosphate as cofactor.

The protein resides in the cytoplasm. The enzyme catalyses (6R)-5,10-methylene-5,6,7,8-tetrahydrofolate + glycine + H2O = (6S)-5,6,7,8-tetrahydrofolate + L-serine. It participates in one-carbon metabolism; tetrahydrofolate interconversion. The protein operates within amino-acid biosynthesis; glycine biosynthesis; glycine from L-serine: step 1/1. Its function is as follows. Catalyzes the reversible interconversion of serine and glycine with tetrahydrofolate (THF) serving as the one-carbon carrier. This reaction serves as the major source of one-carbon groups required for the biosynthesis of purines, thymidylate, methionine, and other important biomolecules. Also exhibits THF-independent aldolase activity toward beta-hydroxyamino acids, producing glycine and aldehydes, via a retro-aldol mechanism. The protein is Serine hydroxymethyltransferase of Oceanobacillus iheyensis (strain DSM 14371 / CIP 107618 / JCM 11309 / KCTC 3954 / HTE831).